A 149-amino-acid polypeptide reads, in one-letter code: UPF0756 membrane protein MS1439 (149 aa).

4 consecutive transmembrane segments (helical) span residues I10–L32, V56–L76, F82–G102, and V126–I146.

Belongs to the UPF0756 family.

Its subcellular location is the cell membrane. The sequence is that of UPF0756 membrane protein MS1439 from Mannheimia succiniciproducens (strain KCTC 0769BP / MBEL55E).